The sequence spans 423 residues: Cyclin-dependent kinase 14 (423 aa).

The disordered stretch occupies residues 62–85 (VGKESPKVRRHSSPSSPTSPKFGK). In terms of domain architecture, Protein kinase spans 89–373 (YEKLEKLGEG…AQAALNHDYF (285 aa)). ATP contacts are provided by residues 95–103 (LGEGSYATV) and Lys-118. The Proton acceptor role is filled by Asp-210.

Belongs to the protein kinase superfamily. CMGC Ser/Thr protein kinase family. CDC2/CDKX subfamily. As to quaternary structure, interacts with ccny; ccny mediates its recruitment to the plasma membrane and promotes phosphorylation of lrp6.

The protein localises to the cell membrane. The enzyme catalyses L-seryl-[protein] + ATP = O-phospho-L-seryl-[protein] + ADP + H(+). It catalyses the reaction L-threonyl-[protein] + ATP = O-phospho-L-threonyl-[protein] + ADP + H(+). Its function is as follows. Serine/threonine-protein kinase involved in the control of the eukaryotic cell cycle, whose activity is controlled by an associated cyclin. Acts as a cell-cycle regulator of Wnt signaling pathway during G2/M phase by mediating the phosphorylation of lrp6, leading to the activation of the Wnt signaling pathway. This chain is Cyclin-dependent kinase 14 (cdk14), found in Xenopus tropicalis (Western clawed frog).